The following is a 346-amino-acid chain: Peroxidase 9 (346 aa).

An N-terminal signal peptide occupies residues 1 to 23 (MAISKLIPTLVLFVLFSFDVSVA). Intrachain disulfides connect cysteine 54–cysteine 134, cysteine 87–cysteine 92, cysteine 140–cysteine 342, and cysteine 219–cysteine 251. Histidine 85 acts as the Proton acceptor in catalysis. 5 residues coordinate Ca(2+): aspartate 86, valine 89, glycine 91, aspartate 93, and serine 95. Proline 182 is a substrate binding site. An N-linked (GlcNAc...) asparagine glycan is attached at asparagine 185. Histidine 212 is a heme b binding site. Threonine 213 is a binding site for Ca(2+). Aspartate 264, serine 267, and aspartate 272 together coordinate Ca(2+).

This sequence belongs to the peroxidase family. Classical plant (class III) peroxidase subfamily. It depends on heme b as a cofactor. Ca(2+) serves as cofactor.

The protein localises to the secreted. The catalysed reaction is 2 a phenolic donor + H2O2 = 2 a phenolic radical donor + 2 H2O. In terms of biological role, removal of H(2)O(2), oxidation of toxic reductants, biosynthesis and degradation of lignin, suberization, auxin catabolism, response to environmental stresses such as wounding, pathogen attack and oxidative stress. These functions might be dependent on each isozyme/isoform in each plant tissue. This chain is Peroxidase 9 (PER9), found in Arabidopsis thaliana (Mouse-ear cress).